The primary structure comprises 124 residues: Large ribosomal subunit protein bL12 (124 aa).

Residues 93 to 124 (GAPSTVKEGASKDEAEEAKKKLEEAGASVELK) form a disordered region. The span at 101–116 (GASKDEAEEAKKKLEE) shows a compositional bias: basic and acidic residues.

This sequence belongs to the bacterial ribosomal protein bL12 family. As to quaternary structure, homodimer. Part of the ribosomal stalk of the 50S ribosomal subunit. Forms a multimeric L10(L12)X complex, where L10 forms an elongated spine to which 2 to 4 L12 dimers bind in a sequential fashion. Binds GTP-bound translation factors.

Functionally, forms part of the ribosomal stalk which helps the ribosome interact with GTP-bound translation factors. Is thus essential for accurate translation. The polypeptide is Large ribosomal subunit protein bL12 (Marinobacter nauticus (strain ATCC 700491 / DSM 11845 / VT8) (Marinobacter aquaeolei)).